A 179-amino-acid polypeptide reads, in one-letter code: MVEAWYMDDSEEDQRRPHRLEPERPVSLAHLQQLGVFYWKLDADKYEDDPELEKIRKERKYCWMDIITICKDKLPNYEEKIKMFYEEHLHLDDEIRYILDGSGYFDVRDKEDKWIRIFMEKGDMITLPAGIYHRFTLDETNYVKAMRLFVGEPVWTAYNRPADHFEIRGQYLQFLAQKG.

Residues 1–12 show a composition bias toward acidic residues; that stretch reads MVEAWYMDDSEE. The segment at 1–21 is disordered; it reads MVEAWYMDDSEEDQRRPHRLE. 4 residues coordinate Fe(2+): histidine 88, histidine 90, glutamate 94, and histidine 133. Ni(2+) is bound by residues histidine 88, histidine 90, glutamate 94, and histidine 133.

The protein belongs to the acireductone dioxygenase (ARD) family. Monomer. Interacts with MMP14. Requires Fe(2+) as cofactor. Ni(2+) serves as cofactor.

It is found in the cytoplasm. It localises to the nucleus. The protein resides in the cell membrane. It catalyses the reaction 1,2-dihydroxy-5-(methylsulfanyl)pent-1-en-3-one + O2 = 4-methylsulfanyl-2-oxobutanoate + formate + 2 H(+). The enzyme catalyses 1,2-dihydroxy-5-(methylsulfanyl)pent-1-en-3-one + O2 = 3-(methylsulfanyl)propanoate + CO + formate + 2 H(+). It functions in the pathway amino-acid biosynthesis; L-methionine biosynthesis via salvage pathway; L-methionine from S-methyl-5-thio-alpha-D-ribose 1-phosphate: step 5/6. Catalyzes 2 different reactions between oxygen and the acireductone 1,2-dihydroxy-3-keto-5-methylthiopentene (DHK-MTPene) depending upon the metal bound in the active site. Fe-containing acireductone dioxygenase (Fe-ARD) produces formate and 2-keto-4-methylthiobutyrate (KMTB), the alpha-ketoacid precursor of methionine in the methionine recycle pathway. Ni-containing acireductone dioxygenase (Ni-ARD) produces methylthiopropionate, carbon monoxide and formate, and does not lie on the methionine recycle pathway. Also down-regulates cell migration mediated by MMP14. This Monodelphis domestica (Gray short-tailed opossum) protein is Acireductone dioxygenase.